Here is a 142-residue protein sequence, read N- to C-terminus: Small ribosomal subunit protein bS6 (142 aa).

The tract at residues lysine 103 to glutamate 142 is disordered. The span at alanine 105–alanine 124 shows a compositional bias: basic and acidic residues. Acidic residues predominate over residues aspartate 125–glutamate 142.

It belongs to the bacterial ribosomal protein bS6 family.

In terms of biological role, binds together with bS18 to 16S ribosomal RNA. This is Small ribosomal subunit protein bS6 from Hahella chejuensis (strain KCTC 2396).